The sequence spans 198 residues: Recombination protein RecR (198 aa).

The C4-type zinc-finger motif lies at 57 to 72; it reads CSICGNLTESDPCAIC. The 96-residue stretch at 80–175 folds into the Toprim domain; the sequence is TTILVVEESK…KVTRLAHGLA (96 aa).

Belongs to the RecR family.

In terms of biological role, may play a role in DNA repair. It seems to be involved in an RecBC-independent recombinational process of DNA repair. It may act with RecF and RecO. In Lactococcus lactis subsp. cremoris (strain SK11), this protein is Recombination protein RecR.